Consider the following 131-residue polypeptide: Large ribosomal subunit protein bL17 (131 aa).

It belongs to the bacterial ribosomal protein bL17 family. Part of the 50S ribosomal subunit. Contacts protein L32.

The chain is Large ribosomal subunit protein bL17 from Azoarcus sp. (strain BH72).